Consider the following 238-residue polypeptide: MORN repeat-containing protein 3 (238 aa).

MORN repeat units lie at residues 38–60 (YTGE…RRKS), 62–84 (YEGD…DSNT), 91–113 (YSGY…AKEY), 114–136 (YEGE…NGDI), 137–159 (YEGE…NENR), 160–182 (YEGS…NKGQ), and 184–205 (YEGV…GRTE).

It localises to the cytoplasmic vesicle. The protein resides in the secretory vesicle. The protein localises to the acrosome. Functionally, assembles a suppression complex (suppresome) by tethering SIRT1 and MDM2 to regulate composite modifications of p53/TP53. Confers both deacetylation-mediated functional inactivation, by SIRT1, and ubiquitination-dependent degradation, by MDM2, of p53/TP53, promoting a proliferative and cell survival behaviors. May play a role in the regulation of spermatogenesis. This is MORN repeat-containing protein 3 (morn3) from Xenopus laevis (African clawed frog).